We begin with the raw amino-acid sequence, 506 residues long: Xaa-Pro aminopeptidase 3 (506 aa).

The N-terminal 31 residues, 1 to 31, are a transit peptide targeting the mitochondrion; that stretch reads MPSLLSTPKLAPVLARLRGLSGCMSCLQRRY. The tract at residues 54–79 is interaction with TNFRSF1B; the sequence is HPHLLRPGEVTPGLSQVEYALRRHKL. 7 residues coordinate substrate: tyrosine 300, aspartate 331, aspartate 342, histidine 423, histidine 430, glutamate 450, and glutamate 474. Mn(2+)-binding residues include aspartate 331, aspartate 342, and histidine 423. Glutamate 450 and glutamate 474 together coordinate Mn(2+).

Belongs to the peptidase M24B family. In terms of assembly, homodimer. Interacts with TNFRSF1B/TNFR2 (activated) and TRAF2. Mn(2+) serves as cofactor. In terms of tissue distribution, expressed in brain, kidney, heart, liver, skeletal muscle and testis.

The protein localises to the mitochondrion. It localises to the cytoplasm. The enzyme catalyses Release of any N-terminal amino acid, including proline, that is linked to proline, even from a dipeptide or tripeptide.. Functionally, catalyzes the removal of a penultimate prolyl residue from the N-termini of peptides, such as Leu-Pro-Ala. Also shows low activity towards peptides with Ala or Ser at the P1 position. Promotes TNFRSF1B-mediated phosphorylation of MAPK8/JNK1 and MAPK9/JNK2, suggesting a function as an adapter protein for TNFRSF1B; the effect is independent of XPNPEP3 peptidase activity. May inhibit apoptotic cell death induced via TNF-TNFRSF1B signaling. This is Xaa-Pro aminopeptidase 3 (Xpnpep3) from Mus musculus (Mouse).